The primary structure comprises 74 residues: Exodeoxyribonuclease 7 small subunit (74 aa).

Belongs to the XseB family. In terms of assembly, heterooligomer composed of large and small subunits.

The protein resides in the cytoplasm. The enzyme catalyses Exonucleolytic cleavage in either 5'- to 3'- or 3'- to 5'-direction to yield nucleoside 5'-phosphates.. Bidirectionally degrades single-stranded DNA into large acid-insoluble oligonucleotides, which are then degraded further into small acid-soluble oligonucleotides. In Neisseria gonorrhoeae (strain ATCC 700825 / FA 1090), this protein is Exodeoxyribonuclease 7 small subunit.